We begin with the raw amino-acid sequence, 123 residues long: Large ribosomal subunit protein mL52 (123 aa).

A mitochondrion-targeting transit peptide spans 1 to 23 (MAALGTVLFTGVRRLHCSVAAWA). Residues 99–109 (QEEQRKQENAL) are compositionally biased toward basic and acidic residues. The segment at 99–123 (QEEQRKQENALKPKGASLKSPLPSQ) is disordered.

The protein belongs to the mitochondrion-specific ribosomal protein mL52 family. As to quaternary structure, component of the mitochondrial large ribosomal subunit (mt-LSU). Mature mammalian 55S mitochondrial ribosomes consist of a small (28S) and a large (39S) subunit. The 28S small subunit contains a 12S ribosomal RNA (12S mt-rRNA) and 30 different proteins. The 39S large subunit contains a 16S rRNA (16S mt-rRNA), a copy of mitochondrial valine transfer RNA (mt-tRNA(Val)), which plays an integral structural role, and 52 different proteins. mL52 connects the central protuberance to the body of the ribosome.

It localises to the mitochondrion. The sequence is that of Large ribosomal subunit protein mL52 (MRPL52) from Homo sapiens (Human).